Consider the following 706-residue polypeptide: Kinesin-like protein KIP2 (706 aa).

2 stretches are compositionally biased toward low complexity: residues 1 to 28 (MIQK…QSPS) and 36 to 63 (SNLT…RSNS). The interval 1–139 (MIQKMSPSLR…QPRSNSHHGS (139 aa)) is disordered. A Kinesin motor domain is found at 102 to 493 (SITVTIRPKP…LRFASRAKNV (392 aa)). Residues 127–139 (RYSQPRSNSHHGS) show a composition bias toward polar residues. 202 to 209 (GMTGSGKT) provides a ligand contact to ATP. The interval 413–445 (VGSNIPSPSASGSSSSSGNATNNGTSPSNHIPY) is disordered. Positions 414-441 (GSNIPSPSASGSSSSSGNATNNGTSPSN) are enriched in low complexity. 3 coiled-coil regions span residues 507-541 (NNDG…NIGE), 569-589 (MRAE…LLDK), and 612-689 (TLLE…RALK).

This sequence belongs to the TRAFAC class myosin-kinesin ATPase superfamily. Kinesin family. As to quaternary structure, might be dimeric.

It localises to the cytoplasm. The protein localises to the cytoskeleton. Functionally, required for assembly of the mitotic spindle. The chain is Kinesin-like protein KIP2 (KIP2) from Saccharomyces cerevisiae (strain ATCC 204508 / S288c) (Baker's yeast).